We begin with the raw amino-acid sequence, 163 residues long: CASP-like protein 1C2 (163 aa).

The Cytoplasmic segment spans residues 1-7 (MAKLHRL). The helical transmembrane segment at 8-28 (ISAVLRLAAAGAAAAAAVIMV) threads the bilayer. Over 29–50 (TSHETTSLFGIEMEAKYSYTPS) the chain is Extracellular. A helical membrane pass occupies residues 51–71 (FVFFVVAFAVTFAYSLLAAVL). The Cytoplasmic portion of the chain corresponds to 72–80 (VRPGTTASR). A helical transmembrane segment spans residues 81 to 101 (LVLLSDVTVGMLLTGAVAATG). The Extracellular segment spans residues 102–129 (AISQVGKSGNEHAGWLPICAQVQAYCGH). Residues 130 to 150 (VMGALIAGFVSLLLYFLIIMY) form a helical membrane-spanning segment. The Cytoplasmic portion of the chain corresponds to 151–163 (SLHAVAEPLCSCH).

It belongs to the Casparian strip membrane proteins (CASP) family. Homodimer and heterodimers.

The protein localises to the cell membrane. The sequence is that of CASP-like protein 1C2 from Zea mays (Maize).